Consider the following 42-residue polypeptide: Beta-defensin 6 (42 aa).

Pyrrolidone carboxylic acid is present on Gln1. 3 disulfides stabilise this stretch: Cys9-Cys38, Cys16-Cys31, and Cys21-Cys39.

It belongs to the beta-defensin family. Neutrophilic granules.

It is found in the secreted. In terms of biological role, has bactericidal activity. Active against E.coli ML35 and S.aureus 502A. This chain is Beta-defensin 6 (DEFB6), found in Bos taurus (Bovine).